The chain runs to 391 residues: UDP-N-acetylglucosamine--N-acetylmuramyl-(pentapeptide) pyrophosphoryl-undecaprenol N-acetylglucosamine transferase (391 aa).

UDP-N-acetyl-alpha-D-glucosamine contacts are provided by residues 11–13 (TGG), R176, S206, and Q312.

Belongs to the glycosyltransferase 28 family. MurG subfamily.

Its subcellular location is the cell inner membrane. It catalyses the reaction di-trans,octa-cis-undecaprenyl diphospho-N-acetyl-alpha-D-muramoyl-L-alanyl-D-glutamyl-meso-2,6-diaminopimeloyl-D-alanyl-D-alanine + UDP-N-acetyl-alpha-D-glucosamine = di-trans,octa-cis-undecaprenyl diphospho-[N-acetyl-alpha-D-glucosaminyl-(1-&gt;4)]-N-acetyl-alpha-D-muramoyl-L-alanyl-D-glutamyl-meso-2,6-diaminopimeloyl-D-alanyl-D-alanine + UDP + H(+). It functions in the pathway cell wall biogenesis; peptidoglycan biosynthesis. Its function is as follows. Cell wall formation. Catalyzes the transfer of a GlcNAc subunit on undecaprenyl-pyrophosphoryl-MurNAc-pentapeptide (lipid intermediate I) to form undecaprenyl-pyrophosphoryl-MurNAc-(pentapeptide)GlcNAc (lipid intermediate II). In Treponema denticola (strain ATCC 35405 / DSM 14222 / CIP 103919 / JCM 8153 / KCTC 15104), this protein is UDP-N-acetylglucosamine--N-acetylmuramyl-(pentapeptide) pyrophosphoryl-undecaprenol N-acetylglucosamine transferase.